A 921-amino-acid chain; its full sequence is Protein translocase subunit SecA (921 aa).

Residues glutamine 86, 104–108, and aspartate 497 each bind ATP; that span reads GEGKT. The segment covering 829 to 838 has biased composition (low complexity); that stretch reads QQAPQQQPQQ. The tract at residues 829–921 is disordered; sequence QQAPQQQPQQ…CHGAIETQKA (93 aa). Over residues 839 to 855 the composition is skewed to pro residues; that stretch reads VAPPPRPQPPQPAPQPP. Zn(2+) is bound by residues cysteine 901, cysteine 903, cysteine 912, and histidine 913.

It belongs to the SecA family. As to quaternary structure, monomer and homodimer. Part of the essential Sec protein translocation apparatus which comprises SecA, SecYEG and auxiliary proteins SecDF-YajC and YidC. Zn(2+) serves as cofactor.

It localises to the cell inner membrane. It is found in the cytoplasm. It catalyses the reaction ATP + H2O + cellular proteinSide 1 = ADP + phosphate + cellular proteinSide 2.. Part of the Sec protein translocase complex. Interacts with the SecYEG preprotein conducting channel. Has a central role in coupling the hydrolysis of ATP to the transfer of proteins into and across the cell membrane, serving both as a receptor for the preprotein-SecB complex and as an ATP-driven molecular motor driving the stepwise translocation of polypeptide chains across the membrane. The chain is Protein translocase subunit SecA from Hyphomonas neptunium (strain ATCC 15444).